Consider the following 697-residue polypeptide: Potassium-transporting ATPase ATP-binding subunit (697 aa).

4 helical membrane-spanning segments follow: residues 55-75 (PIMFVVEIGFVITFILSFFPS), 79-99 (SIPGWFNITVSLILLFTVLFA), 245-265 (LTLIFLIVVVTLPIFTNYLGF), and 271-291 (VLVALLVCLIPTTIGGLLSAI). D324 functions as the 4-aspartylphosphate intermediate in the catalytic mechanism. ATP is bound by residues D361, E365, 393–400 (FKAETRMS), and K412. Positions 535 and 539 each coordinate Mg(2+). The next 3 membrane-spanning stretches (helical) occupy residues 605–625 (FAIIPAMFTLAIPQMEALNIM), 633–653 (AILSALLFNAVIIPLLIPLAM), and 677–697 (GGVIVPFIGIKVIDIIVGLFI).

Belongs to the cation transport ATPase (P-type) (TC 3.A.3) family. Type IA subfamily. In terms of assembly, the system is composed of three essential subunits: KdpA, KdpB and KdpC.

Its subcellular location is the cell membrane. The enzyme catalyses K(+)(out) + ATP + H2O = K(+)(in) + ADP + phosphate + H(+). Its function is as follows. Part of the high-affinity ATP-driven potassium transport (or Kdp) system, which catalyzes the hydrolysis of ATP coupled with the electrogenic transport of potassium into the cytoplasm. This subunit is responsible for energy coupling to the transport system and for the release of the potassium ions to the cytoplasm. This Bacillus cereus (strain AH820) protein is Potassium-transporting ATPase ATP-binding subunit.